The sequence spans 312 residues: Olfactory receptor 4F3/4F16/4F29 (312 aa).

The Extracellular portion of the chain corresponds to 1–25; the sequence is MDGENHSVVSEFLFLGLTHSWEIQL. Residue N5 is glycosylated (N-linked (GlcNAc...) asparagine). A helical transmembrane segment spans residues 26–49; it reads LLLVFSSVLYVASITGNILIVFSV. The Cytoplasmic segment spans residues 50-57; the sequence is TTDPHLHS. A helical transmembrane segment spans residues 58 to 79; that stretch reads PMYFLLASLSFIDLGACSVTSP. Topologically, residues 80–100 are extracellular; that stretch reads KMIYDLFRKRKVISFGGCIAQ. C97 and C189 are joined by a disulfide. Residues 101–120 form a helical membrane-spanning segment; it reads IFFIHVVGGVEMVLLIAMAF. Residues 121–139 lie on the Cytoplasmic side of the membrane; sequence DRYVALCKPLHYLTIMSPR. A helical membrane pass occupies residues 140 to 158; it reads MCLSFLAVAWTLGVSHSLF. At 159–195 the chain is on the extracellular side; it reads QLAFLVNLAFCGPNVLDSFYCDLPRLLRLACTDTYRL. Residues 196–219 form a helical membrane-spanning segment; it reads QFMVTVNSGFICVGTFFILLISYV. Residues 220–235 are Cytoplasmic-facing; that stretch reads FILFTVWKHSSGGSSK. A helical transmembrane segment spans residues 236–258; that stretch reads ALSTLSAHSTVVLLFFGPPMFVY. Over 259–269 the chain is Extracellular; the sequence is TRPHPNSQMDK. The helical transmembrane segment at 270–289 threads the bilayer; that stretch reads FLAIFDAVLTPFLNPVVYTF. The Cytoplasmic portion of the chain corresponds to 290–312; it reads RNKEMKAAIKRVCKQLVIYKRIS.

It belongs to the G-protein coupled receptor 1 family.

The protein localises to the cell membrane. Odorant receptor. The chain is Olfactory receptor 4F3/4F16/4F29 (OR4F3) from Homo sapiens (Human).